We begin with the raw amino-acid sequence, 126 residues long: Cysteine-rich tail protein 1 (126 aa).

Positions 1 to 89 (MDPHETLVKN…PAGLAYAGPP (89 aa)) are disordered.

Belongs to the CYSRT1 family. Interacts with components of the late cornfied envelope (LCE).

The protein resides in the cornified envelope. Component of the stratum corneum that may contribute to epidermal antimicrobial host defenses. The chain is Cysteine-rich tail protein 1 (CYSRT1) from Bos taurus (Bovine).